The sequence spans 275 residues: Anthracycline biosynthesis protein DauV (275 aa).

2 consecutive VOC domains span residues 8-136 (APAW…VWRK) and 150-263 (SVGW…VVEL).

It participates in antibiotic biosynthesis; daunorubicin biosynthesis. Its pathway is antibiotic biosynthesis; carminomycin biosynthesis. In terms of biological role, involved in the biosynthesis of the anthracyclines carminomycin and daunorubicin (daunomycin) which are aromatic polyketide antibiotics that exhibit high cytotoxicity and are widely applied in the chemotherapy of a variety of cancers. Acts jointly with DoxA in the conversion of 13-deoxycarminomycin and 13-deoxydaunorubicin to yield carminomycin and daunorubicin, respectively. In Streptomyces sp. (strain C5), this protein is Anthracycline biosynthesis protein DauV (dauV).